A 935-amino-acid chain; its full sequence is Progesterone receptor (935 aa).

Positions 1–49 are disordered; it reads MTELKAKGLRAPHVAGSPSSPKVGSPLPCRQATGQFPGSQTSDTLPEVS. Positions 1 to 164 are AF3; mediates transcriptional activation; the sequence is MTELKAKGLR…PATQRVLSPL (164 aa). The interval 1-568 is modulating, Pro-Rich; the sequence is MTELKAKGLR…YSFESLPQKI (568 aa). Serine 20 bears the Phosphoserine mark. Positions 32–44 are enriched in polar residues; it reads ATGQFPGSQTSDT. Positions 55–59 match the LXXL motif 1 motif; it reads LDGLL. The segment at 62-158 is disordered; the sequence is RICQAQDPPD…EDPPAAPATQ (97 aa). The residue at position 81 (serine 81) is a Phosphoserine. The LXXL motif 2 signature appears at 115–119; that stretch reads LDTLW. Phosphoserine is present on residues serine 130 and serine 162. Residues 165-305 are mediates transcriptional transrepression; the sequence is MSRSGGKAGD…LATTVTDFIH (141 aa). The Nuclear localization signal signature appears at 183 to 187; sequence KVLPR. The segment at 187–233 is disordered; the sequence is RGLSPSRQLLLPTSGSPHWSGAPVKPSPQPAAVEVEEEDGSESEDSA. Serine 190 is subject to Phosphoserine. Positions 191–203 are enriched in polar residues; the sequence is PSRQLLLPTSGSP. A Phosphoserine modification is found at serine 213. Over residues 220–231 the composition is skewed to acidic residues; the sequence is EVEEEDGSESED. Serine 294 carries the post-translational modification Phosphoserine; by MAPK1. The tract at residues 328–365 is disordered; the sequence is SYDGGSGAASAFAPPRSSPSASSTPVPGSDFPDCAYAP. A compositionally biased stretch (low complexity) spans 335–356; it reads AASAFAPPRSSPSASSTPVPGS. Position 345 is a phosphoserine; by MAPK (serine 345). Residue lysine 388 forms a Glycyl lysine isopeptide (Lys-Gly) (interchain with G-Cter in SUMO); alternate linkage. Residue lysine 388 forms a Glycyl lysine isopeptide (Lys-Gly) (interchain with G-Cter in ubiquitin); alternate linkage. Positions 390 to 452 are disordered; sequence EEEGAEASTR…PASASVSSAS (63 aa). At serine 400 the chain carries Phosphoserine; by CDK2. Positions 418-433 are enriched in pro residues; it reads PLGPPPPLPPRAPPSR. The segment covering 434-452 has biased composition (low complexity); sequence PGEAAVTAAPASASVSSAS. Positions 456–548 are AF1; mediates transcriptional activation; the sequence is STLECILYKA…VYPPYLNYLR (93 aa). Lysine 533 is covalently cross-linked (Glycyl lysine isopeptide (Lys-Gly) (interchain with G-Cter in SUMO)). 2 NR C4-type zinc fingers span residues 569 to 589 and 605 to 629; these read CLIC…CGSC and CAGR…LRKC. Residues 569-641 constitute a DNA-binding region (nuclear receptor); that stretch reads CLICGDEASG…AGMVLGGRKF (73 aa). Serine 678 carries the phosphoserine modification. Positions 681–915 constitute an NR LBD domain; sequence QDIQLIPPLI…EFPEMMSEVI (235 aa). Residues 689 to 935 are AF2; mediates transcriptional activation; the sequence is LINLLLSIEP…MVKPLLFHKK (247 aa). A progesterone-binding site is contributed by arginine 768.

The protein belongs to the nuclear hormone receptor family. In terms of assembly, interacts with SMARD1 and UNC45A. Interacts with CUEDC2; the interaction promotes ubiquitination, decreases sumoylation, and represses transcriptional activity. Interacts with PIAS3; the interaction promotes sumoylation of PR in a hormone-dependent manner, inhibits DNA-binding, and alters nuclear export. Interacts with SP1; the interaction requires ligand-induced phosphorylation on Ser-345 by ERK1/2-MAPK. Interacts with PRMT2. Interacts with NCOA2 and NCOA1. Interacts with KLF9. Interacts with GTF2B. Post-translationally, phosphorylated on multiple serine sites. Several of these sites are hormone-dependent. Phosphorylation on Ser-294 is highly hormone-dependent and modulates ubiquitination and sumoylation on Lys-388. Phosphorylation on Ser-345 also requires induction by hormone. Basal phosphorylation on Ser-81, Ser-162, Ser-190 and Ser-400 is increased in response to progesterone and can be phosphorylated in vitro by the CDK2-A1 complex. Increased levels of phosphorylation on Ser-400 also in the presence of EGF, heregulin, IGF, PMA and FBS. Phosphorylation at this site by CDK2 is ligand-independent, and increases nuclear translocation and transcriptional activity. Phosphorylation at Ser-162 and Ser-294, but not at Ser-190, is impaired during the G(2)/M phase of the cell cycle. Phosphorylation on Ser-345 by ERK1/2 MAPK is required for interaction with SP1. In terms of processing, sumoylation is hormone-dependent and represses transcriptional activity. Sumoylation on all three sites is enhanced by PIAS3. Desumoylated by SENP1. Sumoylation on Lys-388, the main site of sumoylation, is repressed by ubiquitination on the same site, and modulated by phosphorylation at Ser-294. Ubiquitination is hormone-dependent and represses sumoylation on the same site. Promoted by MAPK-mediated phosphorylation on Ser-294. Ubiquitinated by UBR5, leading to its degradation: UBR5 specifically recognizes and binds ligand-bound PGR when it is not associated with coactivators (NCOAs). In presence of NCOAs, the UBR5-degron is not accessible, preventing its ubiquitination and degradation. Post-translationally, palmitoylated by ZDHHC7 and ZDHHC21. Palmitoylation is required for plasma membrane targeting and for rapid intracellular signaling via ERK and AKT kinases and cAMP generation.

The protein resides in the nucleus. It is found in the cytoplasm. The steroid hormones and their receptors are involved in the regulation of eukaryotic gene expression and affect cellular proliferation and differentiation in target tissues. Transcriptional activator of several progesteron-dependent promoters in a variety of cell types. Involved in activation of SRC-dependent MAPK signaling on hormone stimulation. The polypeptide is Progesterone receptor (PGR) (Sapajus apella (Brown-capped capuchin)).